Consider the following 515-residue polypeptide: SWI/SNF global transcription activator complex subunit snf59 (515 aa).

A disordered region spans residues 1–226; the sequence is MEEEDITLEH…IHHVDSKNEE (226 aa). Composition is skewed to basic and acidic residues over residues 7-37, 50-59, 73-85, 94-103, and 116-125; these read TLEHSDDLNKEESGESNRVNIEEPEHHDNSN, EEPKYHDNSN, EPEHHDNSKKEST, EEPKHHDNSN, and EEPKHHDSSN. A compositionally biased stretch (polar residues) spans 126 to 136; sequence KESTNLDNSNM. A compositionally biased stretch (basic and acidic residues) spans 140–226; it reads ENQKNFKIEE…IHHVDSKNEE (87 aa).

This sequence belongs to the RSC7/SWP82 family. SWP82 subfamily. As to quaternary structure, component of the SWI/SNF global transcription activator complex composed of at least arp9, arp42, snf5, snf22, snf30, snf59, sol1, ssr1, ssr2, ssr3, ssr4 and tfg3.

The protein localises to the nucleus. Its function is as follows. Component of the SWI/SNF complex, an ATP-dependent chromatin remodeling complex, which is required for the positive and negative regulation of gene expression of a large number of genes. It changes chromatin structure by altering DNA-histone contacts within a nucleosome, leading eventually to a change in nucleosome position, thus facilitating or repressing binding of gene-specific transcription factors. The polypeptide is SWI/SNF global transcription activator complex subunit snf59 (snf59) (Schizosaccharomyces pombe (strain 972 / ATCC 24843) (Fission yeast)).